A 295-amino-acid polypeptide reads, in one-letter code: Protoheme IX farnesyltransferase (295 aa).

The next 7 helical transmembrane spans lie at 43 to 63, 92 to 112, 114 to 134, 140 to 160, 166 to 186, 231 to 251, and 272 to 292; these read PIQL…VAAL, SAFV…YALV, PLAA…YTPA, WSTE…WSAG, ALGW…FMAV, LLWG…GLWF, and FFAS…DRLF.

This sequence belongs to the UbiA prenyltransferase family. Protoheme IX farnesyltransferase subfamily.

It localises to the cell inner membrane. It catalyses the reaction heme b + (2E,6E)-farnesyl diphosphate + H2O = Fe(II)-heme o + diphosphate. The protein operates within porphyrin-containing compound metabolism; heme O biosynthesis; heme O from protoheme: step 1/1. In terms of biological role, converts heme B (protoheme IX) to heme O by substitution of the vinyl group on carbon 2 of heme B porphyrin ring with a hydroxyethyl farnesyl side group. The protein is Protoheme IX farnesyltransferase of Opitutus terrae (strain DSM 11246 / JCM 15787 / PB90-1).